The following is a 130-amino-acid chain: Anti-adapter protein IraD (130 aa).

The protein belongs to the GpW/Gp25 family. IraD subfamily. As to quaternary structure, interacts with RssB.

Its subcellular location is the cytoplasm. Functionally, inhibits RpoS proteolysis by regulating RssB activity, thereby increasing the stability of the sigma stress factor RpoS during oxidative stress. Its effect on RpoS stability is due to its interaction with RssB, which probably blocks the interaction of RssB with RpoS, and the consequent delivery of the RssB-RpoS complex to the ClpXP protein degradation pathway. This is Anti-adapter protein IraD from Escherichia coli (strain K12 / MC4100 / BW2952).